The following is a 107-amino-acid chain: Phosphoribosyl-ATP pyrophosphatase (107 aa).

This sequence belongs to the PRA-PH family.

The protein resides in the cytoplasm. It carries out the reaction 1-(5-phospho-beta-D-ribosyl)-ATP + H2O = 1-(5-phospho-beta-D-ribosyl)-5'-AMP + diphosphate + H(+). It participates in amino-acid biosynthesis; L-histidine biosynthesis; L-histidine from 5-phospho-alpha-D-ribose 1-diphosphate: step 2/9. This Bacillus mycoides (strain KBAB4) (Bacillus weihenstephanensis) protein is Phosphoribosyl-ATP pyrophosphatase.